The primary structure comprises 748 residues: Putative transmembrane protein ORF88 (748 aa).

Residues 1 to 20 (MIIMKSIILLLAWFLTKTQA) form the signal peptide. Over 21–723 (NMLTESLYLS…LNLAPFKTLS (703 aa)) the chain is Extracellular. Asn-55, Asn-78, Asn-99, Asn-152, Asn-189, Asn-390, Asn-467, and Asn-499 each carry an N-linked (GlcNAc...) asparagine; by host glycan. A disordered region spans residues 531 to 574 (LTFDSPPPPPTTTQAPPPPPTTTQAPPPPPTTTQAPPPPIVINT). A compositionally biased stretch (pro residues) spans 535-570 (SPPPPPTTTQAPPPPPTTTQAPPPPPTTTQAPPPPI). Asn-573, Asn-584, Asn-599, Asn-612, and Asn-617 each carry an N-linked (GlcNAc...) asparagine; by host glycan. The tract at residues 650-680 (PSIGRAPIPPPDVPVEPPRSIPTTNAPSPEE) is disordered. Over residues 656–669 (PIPPPDVPVEPPRS) the composition is skewed to pro residues. A helical transmembrane segment spans residues 724–744 (YAGIGVVSFALLFTILVVCLI). The Cytoplasmic portion of the chain corresponds to 745 to 748 (KFSI).

The protein resides in the host membrane. The chain is Putative transmembrane protein ORF88 from Magallana gigas (Pacific oyster).